Reading from the N-terminus, the 522-residue chain is Amine oxidase [flavin-containing] (522 aa).

At 1–492 (MTANAYDVIV…WERNLPSVGG (492 aa)) the chain is on the cytoplasmic side. Cys-398 is subject to S-8alpha-FAD cysteine. Residues 493-513 (FLKFMGVSSFLAAATAAGLVA) traverse the membrane as a helical; Anchor for type IV membrane protein segment. The Mitochondrial intermembrane segment spans residues 514 to 522 (CKKGLLPRC).

This sequence belongs to the flavin monoamine oxidase family. As to quaternary structure, monomer, homo- or heterodimer (containing two subunits of similar size). Each subunit contains a covalently bound flavin. Enzymatically active as monomer. FAD is required as a cofactor. Strongest expression in brain and intestine, followed by liver, heart and gill. Little expression in spleen, eye or muscle. In brain, highest activity in noradrenergic and serotonergic cell groups and those of the habenulointerpeduncular pathway; moderate levels in dopaminergic cell clusters.

The protein localises to the mitochondrion outer membrane. It carries out the reaction a secondary aliphatic amine + O2 + H2O = a primary amine + an aldehyde + H2O2. It catalyses the reaction a primary methyl amine + O2 + H2O = an aldehyde + H2O2 + NH4(+). The enzyme catalyses serotonin + O2 + H2O = (5-hydroxyindol-3-yl)acetaldehyde + H2O2 + NH4(+). The catalysed reaction is 2-phenylethylamine + O2 + H2O = 2-phenylacetaldehyde + H2O2 + NH4(+). It carries out the reaction tyramine + O2 + H2O = (4-hydroxyphenyl)acetaldehyde + H2O2 + NH4(+). It catalyses the reaction dopamine + O2 + H2O = 3,4-dihydroxyphenylacetaldehyde + H2O2 + NH4(+). The enzyme catalyses (R)-adrenaline + O2 + H2O = (R)-3,4-dihydroxymandelaldehyde + methylamine + H2O2. The catalysed reaction is (R)-noradrenaline + O2 + H2O = (R)-3,4-dihydroxymandelaldehyde + H2O2 + NH4(+). It carries out the reaction kynuramine + O2 + H2O = 3-(2-aminophenyl)-3-oxopropanal + H2O2 + NH4(+). It catalyses the reaction tryptamine + O2 + H2O = indole-3-acetaldehyde + H2O2 + NH4(+). With respect to regulation, inhibited by both clorgyline (selective MAOA inhibitor) and deprenyl (selective MAOB inhibitor). In terms of biological role, catalyzes the oxidative deamination of biogenic and xenobiotic amines and has important functions in the metabolism of neuroactive and vasoactive amines in the central nervous system and peripheral tissues. Preferentially oxidizes serotonin and tyramine. Also catalyzes the oxidative deamination of kynuramine to 3-(2-aminophenyl)-3-oxopropanal that can spontaneously condense to 4-hydroxyquinoline. This is Amine oxidase [flavin-containing] from Danio rerio (Zebrafish).